The chain runs to 317 residues: Phosphopantothenate--cysteine ligase 1 (317 aa).

Belongs to the PPC synthetase family. Homodimer.

The enzyme catalyses (R)-4'-phosphopantothenate + L-cysteine + ATP = N-[(R)-4-phosphopantothenoyl]-L-cysteine + AMP + diphosphate + H(+). It participates in cofactor biosynthesis; coenzyme A biosynthesis; CoA from (R)-pantothenate: step 2/5. In terms of biological role, catalyzes the first step in the biosynthesis of coenzyme A from vitamin B5/pantothenate, where cysteine is conjugated to 4'-phosphopantothenate to form 4-phosphopantothenoylcysteine. The catalytic activity is not CTP- but ATP-dependent. The polypeptide is Phosphopantothenate--cysteine ligase 1 (PPCS1) (Arabidopsis thaliana (Mouse-ear cress)).